Reading from the N-terminus, the 796-residue chain is Transcription factor kayak (796 aa).

Disordered regions lie at residues 109-132 (AYQQQQSKQSYNNNNNSNSNSNTS), 315-341 (VVNNNNNNNNNNNNNSSNNNNNNSNTV), 374-429 (FNCG…GSNG), and 442-490 (VGSA…RNKL). Over residues 402–429 (TTDTSSAATDSTSYQNGGHMFGNNGSNG) the composition is skewed to low complexity. The span at 447–457 (RGTSSTSNNAT) shows a compositional bias: polar residues. The bZIP domain maps to 478–541 (EEKRRVRRER…HQLNFVLEAH (64 aa)). The tract at residues 480 to 499 (KRRVRRERNKLAAARCRKRR) is basic motif. The segment at 506-534 (LSEEVDGLLKKNEDLKKEIEILTNTRHQL) is leucine-zipper. The tract at residues 569-601 (SSGSNGSHHHNSNSNNSNNNNSNNNNNSNSNDS) is disordered. Position 621 is a phosphoserine (Ser621). Disordered regions lie at residues 642-661 (PHDAGLDSSSSLDQDGPPAA) and 774-796 (SSQNKHPLELPTPTSEPSKLVSL).

Belongs to the bZIP family. Fos subfamily. Homodimer. Heterodimer with Jra. The kay-Jra heterodimer binds more stably to the AP-1 site than either of the two proteins alone.

Its subcellular location is the nucleus. Functionally, developmentally regulated transcription factor AP-1 binds and recognizes the enhancer DNA sequence: 5'-TGA[CG]TCA-3'. May play a role in the function or determination of a particular subset of cells in the developing embryo. It is able to carry out its function either independently of or in conjunction with Jra. This Drosophila grimshawi (Hawaiian fruit fly) protein is Transcription factor kayak.